A 650-amino-acid chain; its full sequence is XK-related protein 4 (650 aa).

Residues 1–15 (MAAKSDGRLKMKKSS) show a composition bias toward basic and acidic residues. A disordered region spans residues 1–44 (MAAKSDGRLKMKKSSDVAFTPLQNSDHSGSVQGLAPGLPSGSGA). Polar residues predominate over residues 21 to 31 (PLQNSDHSGSV). A run of 2 helical transmembrane segments spans residues 114-134 (WILA…WLAV) and 144-164 (WFGL…VFSF). Ser200 carries the post-translational modification Phosphoserine. Residues 200–238 (SAAGEGEARPSTPQRQASNASKSNIAAANSGSNSSGATR) are disordered. Over residues 216-238 (ASNASKSNIAAANSGSNSSGATR) the composition is skewed to low complexity. The next 8 membrane-spanning stretches (helical) occupy residues 248-268 (CSFC…GQIW), 306-326 (HLLA…CIIV), 331-351 (LQAL…WALA), 365-385 (KPIS…TIAA), 396-418 (VFQL…WIVH), 428-448 (WEEI…WFNV), 457-477 (LFIY…LWYL), and 487-507 (FAIP…VFML).

This sequence belongs to the XK family. In terms of assembly, homodimer; homodimerization takes place upon caspase cleavage. Interacts with the processed C-terminus of XRCC4 (protein XRCC4, C-terminus); interaction promotes the phospholipid scramblase activity. In terms of processing, undergoes proteolytic processing by caspase-3 (CASP3), caspase-6 (CASP6) and caspase-7 (CASP7) to generate the XK-related protein 4, processed form, leading to its activation.

The protein resides in the cell membrane. It catalyses the reaction a 1,2-diacyl-sn-glycero-3-phospho-L-serine(in) = a 1,2-diacyl-sn-glycero-3-phospho-L-serine(out). Its activity is regulated as follows. Phospholipid scramblase activity is activated upon caspase cleavage to generate the XK-related protein 4, processed form. Does not act prior the onset of apoptosis. With respect to regulation, homodimerizes upon caspase cleavage. Phospholipid scramblase activity is activated following interaction with the processed C-terminus of XRCC4 (protein XRCC4, C-terminus). Phospholipid scramblase that promotes phosphatidylserine exposure on apoptotic cell surface. Phosphatidylserine is a specific marker only present at the surface of apoptotic cells and acts as a specific signal for engulfment. The sequence is that of XK-related protein 4 from Homo sapiens (Human).